The chain runs to 62 residues: uncharacterized protein (62 aa).

The protein resides in the plastid. It is found in the chloroplast. This is an uncharacterized protein from Chlamydomonas reinhardtii (Chlamydomonas smithii).